Consider the following 402-residue polypeptide: Flavohemoprotein (402 aa).

Residues 1–138 form the Globin domain; it reads MLSPEVRALV…LADLLIGRER (138 aa). Histidine 85 provides a ligand contact to heme b. Residues tyrosine 95 and glutamate 137 each act as charge relay system in the active site. The segment at 149-402 is reductase; sequence GGWTGWRAFK…AEVFGTGGVA (254 aa). Residues 152 to 261 form the FAD-binding FR-type domain; it reads TGWRAFKVVR…SPPQGDFTLD (110 aa). Residues tyrosine 190 and 206 to 209 contribute to the FAD site; that span reads RQYS. Residue 274–279 participates in NADP(+) binding; the sequence is GVGLTP. An FAD-binding site is contributed by 395–398; that stretch reads VFGT.

This sequence belongs to the globin family. Two-domain flavohemoproteins subfamily. The protein in the C-terminal section; belongs to the flavoprotein pyridine nucleotide cytochrome reductase family. Heme b serves as cofactor. It depends on FAD as a cofactor.

It catalyses the reaction 2 nitric oxide + NADPH + 2 O2 = 2 nitrate + NADP(+) + H(+). The catalysed reaction is 2 nitric oxide + NADH + 2 O2 = 2 nitrate + NAD(+) + H(+). Its function is as follows. Is involved in NO detoxification in an aerobic process, termed nitric oxide dioxygenase (NOD) reaction that utilizes O(2) and NAD(P)H to convert NO to nitrate, which protects the bacterium from various noxious nitrogen compounds. Therefore, plays a central role in the inducible response to nitrosative stress. This is Flavohemoprotein from Bordetella bronchiseptica (strain ATCC BAA-588 / NCTC 13252 / RB50) (Alcaligenes bronchisepticus).